Here is a 320-residue protein sequence, read N- to C-terminus: Heterogeneous nuclear ribonucleoprotein A1 (320 aa).

At methionine 1 the chain carries N-acetylmethionine. An N-acetylserine; in Heterogeneous nuclear ribonucleoprotein A1, N-terminally processed modification is found at serine 2. Phosphoserine is present on serine 2. Lysine 3 bears the N6-acetyllysine; alternate mark. A Glycyl lysine isopeptide (Lys-Gly) (interchain with G-Cter in SUMO2); alternate cross-link involves residue lysine 3. Residues serine 4 and serine 6 each carry the phosphoserine modification. The segment at 4–94 (SESPKEPEQL…EPKRAVSRED (91 aa)) is globular A domain. Residue lysine 8 forms a Glycyl lysine isopeptide (Lys-Gly) (interchain with G-Cter in SUMO2) linkage. RRM domains lie at 14–97 (RKLF…DSQR) and 105–184 (KKIF…LSKQ). Serine 22 carries the post-translational modification Phosphoserine. Lysine 78 participates in a covalent cross-link: Glycyl lysine isopeptide (Lys-Gly) (interchain with G-Cter in SUMO2). Residues 95-185 (SQRPGAHLTV…EVRKALSKQE (91 aa)) form a globular B domain region. Lysine 113 is covalently cross-linked (Glycyl lysine isopeptide (Lys-Gly) (interchain with G-Cter in SUMO)). Glycyl lysine isopeptide (Lys-Gly) (interchain with G-Cter in SUMO2) cross-links involve residues lysine 179 and lysine 183. The segment at 182–216 (SKQEMASASSSQRGRSGSGNFGGGRGGGFGGNDNF) is disordered. At serine 192 the chain carries Phosphoserine; by MKNK2. Arginine 194 carries the post-translational modification Asymmetric dimethylarginine; alternate. Position 194 is a dimethylated arginine; alternate (arginine 194). Arginine 194 is subject to Omega-N-methylarginine; alternate. Over residues 197–216 (SGSGNFGGGRGGGFGGNDNF) the composition is skewed to gly residues. A Phosphoserine modification is found at serine 199. 4 positions are modified to asymmetric dimethylarginine; alternate: arginine 206, arginine 218, arginine 225, and arginine 232. Position 206 is a dimethylated arginine; alternate (arginine 206). Omega-N-methylarginine; alternate occurs at positions 206, 218, 225, and 232. An RNA-binding RGG-box region spans residues 218-240 (RGGNFSGRGGFGGSRGGGGYGGS). Arginine 225 carries the post-translational modification Dimethylated arginine; alternate. Residues 268-305 (NQSSNFGPMKGGNFGGRSLGPYGGGGQYFAKPRNQGGY) form a nuclear targeting sequence region. The span at 277-294 (KGGNFGGRSLGPYGGGGQ) shows a compositional bias: gly residues. The tract at residues 277 to 320 (KGGNFGGRSLGPYGGGGQYFAKPRNQGGYGGSSSSSSYGSGRRF) is disordered. The residue at position 284 (arginine 284) is an Omega-N-methylarginine. A Phosphoserine modification is found at serine 285. An N6-acetyllysine; alternate modification is found at lysine 298. Lysine 298 participates in a covalent cross-link: Glycyl lysine isopeptide (Lys-Gly) (interchain with G-Cter in SUMO2); alternate. An Omega-N-methylarginine modification is found at arginine 300. A compositionally biased stretch (low complexity) spans 308-320 (SSSSSSYGSGRRF). Residue serine 309 is modified to Phosphoserine. Serine 310, serine 311, and serine 312 each carry phosphoserine; by MKNK2. Residues serine 313 and serine 316 each carry the phosphoserine modification. An Omega-N-methylarginine modification is found at arginine 318.

Identified in the spliceosome C complex. Identified in a IGF2BP1-dependent mRNP granule complex containing untranslated mRNAs. Interacts with SEPT6, C9orf72, KHDRBS1, UBQLN2. Interacts with PPIA/CYPA. Post-translationally, sumoylated.

Its subcellular location is the nucleus. The protein resides in the cytoplasm. In terms of biological role, involved in the packaging of pre-mRNA into hnRNP particles, transport of poly(A) mRNA from the nucleus to the cytoplasm and modulation of splice site selection. Plays a role in the splicing of pyruvate kinase PKM by binding repressively to sequences flanking PKM exon 9, inhibiting exon 9 inclusion and resulting in exon 10 inclusion and production of the PKM M2 isoform. Binds to the IRES and thereby inhibits the translation of the apoptosis protease activating factor APAF1. May bind to specific miRNA hairpins. This Macaca mulatta (Rhesus macaque) protein is Heterogeneous nuclear ribonucleoprotein A1 (HNRNPA1).